The primary structure comprises 399 residues: S-adenosylmethionine synthase (399 aa).

Residue histidine 15 participates in ATP binding. Aspartate 17 serves as a coordination point for Mg(2+). Glutamate 43 provides a ligand contact to K(+). L-methionine-binding residues include glutamate 56 and glutamine 99. The flexible loop stretch occupies residues 99 to 109; sequence QSPDIADGVDH. ATP-binding positions include 175-177, 242-243, aspartate 251, 257-258, alanine 274, and lysine 278; these read DAK, RF, and RK. Aspartate 251 contributes to the L-methionine binding site. Residue lysine 282 participates in L-methionine binding.

Belongs to the AdoMet synthase family. Homotetramer; dimer of dimers. The cofactor is Mg(2+). It depends on K(+) as a cofactor.

The protein localises to the cytoplasm. The enzyme catalyses L-methionine + ATP + H2O = S-adenosyl-L-methionine + phosphate + diphosphate. It functions in the pathway amino-acid biosynthesis; S-adenosyl-L-methionine biosynthesis; S-adenosyl-L-methionine from L-methionine: step 1/1. In terms of biological role, catalyzes the formation of S-adenosylmethionine (AdoMet) from methionine and ATP. The overall synthetic reaction is composed of two sequential steps, AdoMet formation and the subsequent tripolyphosphate hydrolysis which occurs prior to release of AdoMet from the enzyme. The polypeptide is S-adenosylmethionine synthase (Lactobacillus acidophilus (strain ATCC 700396 / NCK56 / N2 / NCFM)).